Here is an 828-residue protein sequence, read N- to C-terminus: Periplasmic nitrate reductase (828 aa).

Residues 1–31 (MKLSRRSFMKANAVAAAAAAAGLSVPGVARA) constitute a signal peptide (tat-type signal). The region spanning 39–95 (IKWDKAPCRFCGTGCGVLVGTQQGRVVACQGDPDAPVNRGLNCIKGYFLPKIMYGKD) is the 4Fe-4S Mo/W bis-MGD-type domain. [4Fe-4S] cluster-binding residues include Cys46, Cys49, Cys53, and Cys81. Residues Lys83, Gln150, Asn175, Cys179, 212–219 (WGANMAEM), 243–247 (STYQH), 262–264 (QSD), Met372, Gln376, Asn482, 508–509 (SD), Lys531, Asp558, and 718–727 (TGRVLEHWHT) contribute to the Mo-bis(molybdopterin guanine dinucleotide) site. Residue Phe794 coordinates substrate. Positions 802 and 819 each coordinate Mo-bis(molybdopterin guanine dinucleotide).

It belongs to the prokaryotic molybdopterin-containing oxidoreductase family. NasA/NapA/NarB subfamily. Component of the periplasmic nitrate reductase NapAB complex composed of NapA and NapB. The cofactor is [4Fe-4S] cluster. Requires Mo-bis(molybdopterin guanine dinucleotide) as cofactor. Predicted to be exported by the Tat system. The position of the signal peptide cleavage has not been experimentally proven.

It is found in the periplasm. It carries out the reaction 2 Fe(II)-[cytochrome] + nitrate + 2 H(+) = 2 Fe(III)-[cytochrome] + nitrite + H2O. Functionally, catalytic subunit of the periplasmic nitrate reductase complex NapAB. Receives electrons from NapB and catalyzes the reduction of nitrate to nitrite. This chain is Periplasmic nitrate reductase, found in Escherichia coli O157:H7 (strain EC4115 / EHEC).